A 147-amino-acid chain; its full sequence is Small ribosomal subunit protein uS9 (147 aa).

The protein belongs to the universal ribosomal protein uS9 family.

This is Small ribosomal subunit protein uS9 (rps16) from Dictyostelium discoideum (Social amoeba).